We begin with the raw amino-acid sequence, 795 residues long: Glycerol-3-phosphate acyltransferase 2, mitochondrial (795 aa).

Positions 1 to 21 (MATMLEGRCQTQPRSSPSGRE) are disordered. The Cytoplasmic portion of the chain corresponds to 1 to 305 (MATMLEGRCQ…LGPRLSALGQ (305 aa)). Over residues 9 to 18 (CQTQPRSSPS) the composition is skewed to polar residues. Residues 180–331 (QLHKGQMKMV…DALLVPVAVT (152 aa)) form an acyltransferase region. Residues 205–210 (HKTLLD) carry the HXXXXD motif motif. A helical membrane pass occupies residues 306 to 332 (AWVGFVVQAVQVGIVPDALLVPVAVTY). Topologically, residues 333–449 (DLVPDAPCDI…QLLVRRLSCH (117 aa)) are mitochondrial intermembrane. Residues 450–472 (VLSASVGSSAVMSTAIMATLLLF) traverse the membrane as a helical segment. Over 473-795 (KHQKLLGEFS…EQFIRQFICS (323 aa)) the chain is Cytoplasmic. Residue Ser-656 is modified to Phosphoserine. The residue at position 660 (Thr-660) is a Phosphothreonine. Phosphoserine occurs at positions 662 and 664.

It belongs to the GPAT/DAPAT family. In terms of assembly, interacts with PIWIL2.

The protein resides in the mitochondrion outer membrane. The enzyme catalyses sn-glycerol 3-phosphate + an acyl-CoA = a 1-acyl-sn-glycero-3-phosphate + CoA. It carries out the reaction a 1-acyl-sn-glycero-3-phosphate + an acyl-CoA = a 1,2-diacyl-sn-glycero-3-phosphate + CoA. It catalyses the reaction 1-(9Z-octadecenoyl)-sn-glycero-3-phosphate + (9Z)-octadecenoyl-CoA = 1,2-di-(9Z-octadecenoyl)-sn-glycero-3-phosphate + CoA. The catalysed reaction is 1-(9Z-octadecenoyl)-sn-glycero-3-phosphate + (5Z,8Z,11Z,14Z)-eicosatetraenoyl-CoA = 1-(9Z)-octadecenoyl-2-(5Z,8Z,11Z,14Z)-eicosatetraenoyl-sn-glycero-3-phosphate + CoA. The enzyme catalyses (5Z,8Z,11Z,14Z)-eicosatetraenoyl-CoA + sn-glycerol 3-phosphate = 1-(5Z,8Z,11Z,14Z-eicosatetraenoyl)-sn-glycero-3-phosphate + CoA. It participates in phospholipid metabolism; CDP-diacylglycerol biosynthesis; CDP-diacylglycerol from sn-glycerol 3-phosphate: step 1/3. Inhibited by N-ethylmaleimide (NEM). Transfers an acyl-group from acyl-ACP to the sn-1 position of glycerol-3-phosphate producing a lysophosphatidic acid (LPA), an essential step for the triacylglycerol (TAG) and glycerophospholipids. In vitro also transfers an acyl-group from acyl-ACP to the LPA producing a phosphatidic acid (PA). Prefers arachidonoyl-CoA as the acyl donor. Required for primary processing step during piRNA biosynthesis. Molecular mechanisms by which it promotes piRNA biosynthesis are unclear and do not involve its acyltransferase activity. This Homo sapiens (Human) protein is Glycerol-3-phosphate acyltransferase 2, mitochondrial.